A 153-amino-acid chain; its full sequence is Holo-[acyl-carrier-protein] synthase (153 aa).

Mg(2+) contacts are provided by Asp24 and Glu78.

It belongs to the P-Pant transferase superfamily. AcpS family. The cofactor is Mg(2+).

The protein localises to the cytoplasm. The catalysed reaction is apo-[ACP] + CoA = holo-[ACP] + adenosine 3',5'-bisphosphate + H(+). Its function is as follows. Transfers the 4'-phosphopantetheine moiety from coenzyme A to a Ser of acyl-carrier-protein. The protein is Holo-[acyl-carrier-protein] synthase of Bordetella pertussis (strain Tohama I / ATCC BAA-589 / NCTC 13251).